Here is a 292-residue protein sequence, read N- to C-terminus: Tubulin beta chain (292 aa).

GTP-binding residues include N49 and N71. A disordered region spans residues S265–A292. Positions T274 to A292 are enriched in acidic residues.

Belongs to the tubulin family. In terms of assembly, dimer of alpha and beta chains. A typical microtubule is a hollow water-filled tube with an outer diameter of 25 nm and an inner diameter of 15 nM. Alpha-beta heterodimers associate head-to-tail to form protofilaments running lengthwise along the microtubule wall with the beta-tubulin subunit facing the microtubule plus end conferring a structural polarity. Microtubules usually have 13 protofilaments but different protofilament numbers can be found in some organisms and specialized cells. Mg(2+) serves as cofactor.

It is found in the cytoplasm. It localises to the cytoskeleton. Tubulin is the major constituent of microtubules, a cylinder consisting of laterally associated linear protofilaments composed of alpha- and beta-tubulin heterodimers. Microtubules grow by the addition of GTP-tubulin dimers to the microtubule end, where a stabilizing cap forms. Below the cap, tubulin dimers are in GDP-bound state, owing to GTPase activity of alpha-tubulin. This Strongylocentrotus purpuratus (Purple sea urchin) protein is Tubulin beta chain.